The sequence spans 69 residues: MAESILKSAKINRNVGQVLKSYLRVLKLSKKPSREEFLMISKVAGAGILVIGFVGFLIYVLLTEVPKWV.

A helical membrane pass occupies residues 43 to 63 (VAGAGILVIGFVGFLIYVLLT).

This sequence belongs to the SecE/SEC61-gamma family. In terms of assembly, component of the Sec protein translocase complex. Heterotrimer consisting of SecY (alpha), SecG (beta) and SecE (gamma) subunits. The heterotrimers can form oligomers, although 1 heterotrimer is thought to be able to translocate proteins. Interacts with the ribosome. May interact with SecDF, and other proteins may be involved.

The protein resides in the cell membrane. Its function is as follows. Essential subunit of the Sec protein translocation channel SecYEG. Clamps together the 2 halves of SecY. May contact the channel plug during translocation. This chain is Protein translocase subunit SecE, found in Methanococcoides burtonii (strain DSM 6242 / NBRC 107633 / OCM 468 / ACE-M).